A 240-amino-acid chain; its full sequence is Glutathione-independent glyoxalase hsp3102 (240 aa).

Residues Cys-141, His-142, and Glu-175 contribute to the active site.

Belongs to the peptidase C56 family. HSP31-like subfamily.

It is found in the cytoplasm. The protein localises to the nucleus. It catalyses the reaction methylglyoxal + H2O = (R)-lactate + H(+). In terms of biological role, catalyzes the conversion of methylglyoxal (MG) to D-lactate in a single glutathione (GSH)-independent step. May play a role in detoxifying endogenously produced glyoxals. Involved in protection against reactive oxygen species (ROS). The polypeptide is Glutathione-independent glyoxalase hsp3102 (Schizosaccharomyces pombe (strain 972 / ATCC 24843) (Fission yeast)).